Consider the following 162-residue polypeptide: MALITTGNGLIRDLEKFGSVGVYVPLEGGFEGRYRRRLRAAGYTTLQFTARGLGDVAAYLTGVHGVRPPHLGKKSSGNGAAVGNVYYLPPIVGSQLEHLPPKSKGLVLWIIEGHILSDQEVEFLTDLPKLEPRVKVVVERGGDRTFRWKALKDTFSASYQAV.

It belongs to the complex I NdhN subunit family. NDH-1 can be composed of about 15 different subunits; different subcomplexes with different compositions have been identified which probably have different functions.

It localises to the cellular thylakoid membrane. It carries out the reaction a plastoquinone + NADH + (n+1) H(+)(in) = a plastoquinol + NAD(+) + n H(+)(out). The catalysed reaction is a plastoquinone + NADPH + (n+1) H(+)(in) = a plastoquinol + NADP(+) + n H(+)(out). In terms of biological role, NDH-1 shuttles electrons from an unknown electron donor, via FMN and iron-sulfur (Fe-S) centers, to quinones in the respiratory and/or the photosynthetic chain. The immediate electron acceptor for the enzyme in this species is believed to be plastoquinone. Couples the redox reaction to proton translocation, and thus conserves the redox energy in a proton gradient. Cyanobacterial NDH-1 also plays a role in inorganic carbon-concentration. The polypeptide is NAD(P)H-quinone oxidoreductase subunit N (Trichormus variabilis (strain ATCC 29413 / PCC 7937) (Anabaena variabilis)).